A 377-amino-acid chain; its full sequence is Uroporphyrinogen decarboxylase (377 aa).

Substrate-binding positions include 40–44, D89, Y169, S224, and H354; that span reads RQAGR.

The protein belongs to the uroporphyrinogen decarboxylase family. Homodimer.

The protein localises to the cytoplasm. The catalysed reaction is uroporphyrinogen III + 4 H(+) = coproporphyrinogen III + 4 CO2. The protein operates within porphyrin-containing compound metabolism; protoporphyrin-IX biosynthesis; coproporphyrinogen-III from 5-aminolevulinate: step 4/4. Functionally, catalyzes the decarboxylation of four acetate groups of uroporphyrinogen-III to yield coproporphyrinogen-III. This chain is Uroporphyrinogen decarboxylase, found in Leifsonia xyli subsp. xyli (strain CTCB07).